The chain runs to 419 residues: S-adenosylmethionine synthase (419 aa).

Position 15 (histidine 15) interacts with ATP. Aspartate 17 is a Mg(2+) binding site. Glutamate 43 contacts K(+). 2 residues coordinate L-methionine: glutamate 56 and glutamine 100. A flexible loop region spans residues 100 to 110 (QSPDIAQGVDE). Residues 171–173 (DGK), 248–249 (KF), aspartate 257, 263–264 (RK), alanine 280, and lysine 284 each bind ATP. Residue aspartate 257 coordinates L-methionine. An L-methionine-binding site is contributed by lysine 288.

This sequence belongs to the AdoMet synthase family. As to quaternary structure, homotetramer; dimer of dimers. Mg(2+) is required as a cofactor. K(+) serves as cofactor.

The protein resides in the cytoplasm. It catalyses the reaction L-methionine + ATP + H2O = S-adenosyl-L-methionine + phosphate + diphosphate. It functions in the pathway amino-acid biosynthesis; S-adenosyl-L-methionine biosynthesis; S-adenosyl-L-methionine from L-methionine: step 1/1. Catalyzes the formation of S-adenosylmethionine (AdoMet) from methionine and ATP. The overall synthetic reaction is composed of two sequential steps, AdoMet formation and the subsequent tripolyphosphate hydrolysis which occurs prior to release of AdoMet from the enzyme. The protein is S-adenosylmethionine synthase of Parasynechococcus marenigrum (strain WH8102).